The chain runs to 240 residues: Ribosomal RNA small subunit methyltransferase G (240 aa).

S-adenosyl-L-methionine-binding positions include Gly80, Phe85, Ala131–Glu132, and Arg150.

Belongs to the methyltransferase superfamily. RNA methyltransferase RsmG family.

It localises to the cytoplasm. In terms of biological role, specifically methylates the N7 position of a guanine in 16S rRNA. This chain is Ribosomal RNA small subunit methyltransferase G, found in Dictyoglomus thermophilum (strain ATCC 35947 / DSM 3960 / H-6-12).